Reading from the N-terminus, the 354-residue chain is Protein-arginine kinase (354 aa).

The Phosphagen kinase C-terminal domain occupies 24-254 (IVLSSRIRLA…QQIIQQEKMA (231 aa)). Residues 27–31 (SSRIR), His-92, Arg-125, 176–180 (RASVM), and 207–212 (RGIYGE) each bind ATP. An RDXXRA motif of the pArg binding pocket involved in allosteric regulation motif is present at residues 337–342 (RDYRRA).

Belongs to the ATP:guanido phosphotransferase family.

It carries out the reaction L-arginyl-[protein] + ATP = N(omega)-phospho-L-arginyl-[protein] + ADP + H(+). With respect to regulation, appears to be allosterically activated by the binding of pArg-containing polypeptides to the pArg-binding pocket localized in the C-terminal domain of McsB. Catalyzes the specific phosphorylation of arginine residues in a large number of proteins. Is part of the bacterial stress response system. Protein arginine phosphorylation has a physiologically important role and is involved in the regulation of many critical cellular processes, such as protein homeostasis, motility, competence, and stringent and stress responses, by regulating gene expression and protein activity. The protein is Protein-arginine kinase of Bacillus cereus (strain G9842).